Consider the following 299-residue polypeptide: Probable lipid kinase YegS (299 aa).

Positions 2–133 constitute a DAGKc domain; it reads ANFPDSLLIL…IDMARVNDKT (132 aa). ATP contacts are provided by residues Thr-40, 66 to 72, and Thr-95; that span reads GDGTINE. Leu-215, Asp-218, and Leu-220 together coordinate Mg(2+). Residue Glu-271 is the Proton acceptor of the active site.

Belongs to the diacylglycerol/lipid kinase family. YegS lipid kinase subfamily. It depends on Mg(2+) as a cofactor. Ca(2+) serves as cofactor.

It is found in the cytoplasm. Its function is as follows. Probably phosphorylates lipids; the in vivo substrate is unknown. This Salmonella arizonae (strain ATCC BAA-731 / CDC346-86 / RSK2980) protein is Probable lipid kinase YegS.